Consider the following 502-residue polypeptide: Probable cytosol aminopeptidase (502 aa).

Residues K265 and D270 each coordinate Mn(2+). Residue K277 is part of the active site. Residues D288, D347, and E349 each coordinate Mn(2+). R351 is an active-site residue.

The protein belongs to the peptidase M17 family. Mn(2+) is required as a cofactor.

It localises to the cytoplasm. It carries out the reaction Release of an N-terminal amino acid, Xaa-|-Yaa-, in which Xaa is preferably Leu, but may be other amino acids including Pro although not Arg or Lys, and Yaa may be Pro. Amino acid amides and methyl esters are also readily hydrolyzed, but rates on arylamides are exceedingly low.. The enzyme catalyses Release of an N-terminal amino acid, preferentially leucine, but not glutamic or aspartic acids.. Its function is as follows. Presumably involved in the processing and regular turnover of intracellular proteins. Catalyzes the removal of unsubstituted N-terminal amino acids from various peptides. This is Probable cytosol aminopeptidase from Rickettsia bellii (strain RML369-C).